We begin with the raw amino-acid sequence, 184 residues long: Non-fimbrial adhesin 1 (184 aa).

The signal sequence occupies residues 1–28 (MKAKKYENQIYNENGRRCQRHGRRLAIA). An intrachain disulfide couples Cys57 to Cys91.

Forms a polymeric structure, which disintegrates with elevated temperature into a monomer but with some relatively stable dimers.

This is Non-fimbrial adhesin 1 (nfaA) from Escherichia coli.